The following is a 649-amino-acid chain: Acetyl-coenzyme A synthetase (649 aa).

CoA is bound by residues 190–193 (RGGR) and Thr310. Residues 386–388 (GEP), 410–415 (DTWWQT), Asp499, and Arg514 each bind ATP. A CoA-binding site is contributed by Ser522. Position 525 (Arg525) interacts with ATP. Residues Val536, His538, and Val541 each coordinate Mg(2+). Arg583 is a binding site for CoA. Lys608 is modified (N6-acetyllysine).

The protein belongs to the ATP-dependent AMP-binding enzyme family. The cofactor is Mg(2+). Post-translationally, acetylated. Deacetylation by the SIR2-homolog deacetylase activates the enzyme.

It carries out the reaction acetate + ATP + CoA = acetyl-CoA + AMP + diphosphate. Its function is as follows. Catalyzes the conversion of acetate into acetyl-CoA (AcCoA), an essential intermediate at the junction of anabolic and catabolic pathways. AcsA undergoes a two-step reaction. In the first half reaction, AcsA combines acetate with ATP to form acetyl-adenylate (AcAMP) intermediate. In the second half reaction, it can then transfer the acetyl group from AcAMP to the sulfhydryl group of CoA, forming the product AcCoA. The chain is Acetyl-coenzyme A synthetase from Methylorubrum populi (strain ATCC BAA-705 / NCIMB 13946 / BJ001) (Methylobacterium populi).